A 756-amino-acid polypeptide reads, in one-letter code: Inactive carboxypeptidase-like protein X2 (756 aa).

A signal peptide spans 1-25 (MSRPGTATPALALVLLAVTLAGVGA). The tract at residues 51-131 (EPELETFSPP…DHSVRVARED (81 aa)) is disordered. Basic and acidic residues predominate over residues 68–78 (EWERRPQEPRP). A compositionally biased stretch (basic residues) spans 79–90 (PKRATKPKKAPK). The span at 113 to 131 (KSSEKAANDDHSVRVARED) shows a compositional bias: basic and acidic residues. In terms of domain architecture, F5/8 type C spans 134-293 (ESCPPLGLET…ICMRMEILGC (160 aa)). Cys-136 and Cys-293 are oxidised to a cystine. Asn-231, Asn-241, Asn-281, Asn-337, and Asn-491 each carry an N-linked (GlcNAc...) asparagine glycan. The Peptidase M14 domain maps to 317 to 640 (KHHNYKEMRQ…ESLIVFMEQV (324 aa)).

Belongs to the peptidase M14 family.

It is found in the secreted. In terms of biological role, may be involved in cell-cell interactions. The protein is Inactive carboxypeptidase-like protein X2 (CPXM2) of Homo sapiens (Human).